The following is a 70-amino-acid chain: uncharacterized protein (70 aa).

The next 2 helical transmembrane spans lie at 13-33 (YYAF…LLGF) and 39-59 (QTYA…GLII).

It localises to the cell membrane. This is an uncharacterized protein from Escherichia coli O6:H1 (strain CFT073 / ATCC 700928 / UPEC).